The chain runs to 258 residues: 4-hydroxy-2-oxovalerate aldolase (258 aa).

The active-site Proton acceptor is H48. Residue Q149 coordinates substrate. Residue E151 coordinates Mg(2+). Substrate is bound by residues A176 and D177. A Mg(2+)-binding site is contributed by D177.

It belongs to the HpcH/HpaI aldolase family.

It catalyses the reaction (S)-4-hydroxy-2-oxopentanoate = acetaldehyde + pyruvate. It participates in xenobiotic degradation; biphenyl degradation. Functionally, catalyzes the reversible retro-aldol cleavage of 4-hydroxy-2-oxovalerate to pyruvate and acetaldehyde. This Rhodococcus jostii (strain RHA1) protein is 4-hydroxy-2-oxovalerate aldolase (bphF).